The sequence spans 236 residues: Protein CUSTOS (236 aa).

Disordered regions lie at residues M1 to P57 and V83 to E236. Composition is skewed to basic and acidic residues over residues N10–N51 and E156–E165. The Nucleolar localization signal (NLS1) signature appears at K173–K181. Over residues T182–E196 the composition is skewed to basic and acidic residues. The segment covering K197–A210 has biased composition (polar residues). The short motif at G211–K219 is the Nucleolar localization signal (NLS2) element. The span at L214 to K227 shows a compositional bias: basic residues.

The protein belongs to the CUSTOS family. As to quaternary structure, interacts (via NLS1 and NLS2) with dvl2; the interaction is negatively regulated by Wnt stimulation. Interacts with csnk1a1. Interacts with ctnnb1; the interaction is positively regulated by Wnt stimulation. In terms of processing, phosphorylated by ck1/csnk1a1.

Its subcellular location is the nucleus envelope. Essential for Spemann-Mangold organizer formation and subsequent anterior head development in the embryo. Inhibits canonical Wnt signaling pathway by antagonizing nuclear import of beta-catenin (ctnnb1) during embryogenesis. In Danio rerio (Zebrafish), this protein is Protein CUSTOS.